We begin with the raw amino-acid sequence, 689 residues long: DNA polymerase epsilon subunit B (689 aa).

The segment covering 98-115 (EWSHEHPIQHEENILGRT) has biased composition (basic and acidic residues). Residues 98 to 155 (EWSHEHPIQHEENILGRTDDDENNSDDEMPIAADSSLQNVSLSSPMRQPTERDEYKQP) form a disordered region. Acidic residues predominate over residues 116 to 126 (DDDENNSDDEM). Residue serine 122 is modified to Phosphoserine. The segment covering 132–144 (SSLQNVSLSSPMR) has biased composition (polar residues). Serine 141 bears the Phosphoserine; by CDC28 mark. Basic and acidic residues predominate over residues 146-155 (PTERDEYKQP). Serine 613 is subject to Phosphoserine.

Belongs to the DNA polymerase epsilon subunit B family. In terms of assembly, DNA polymerase epsilon is a heterotetramer consisting of POL2, DPB2, DPB3 and DPB4. In terms of processing, phosphorylated in a cell cycle dependent manner during late G1 phase. Phosphorylation may facilitate the interaction with POL2 or the activity of DNA polymerase II. Phosphorylation is independent of DNA replication but dependent upon CDC28 in vivo. Both Ser-141 and Ser-613 are phosphorylated in vivo, but in vitro only Ser-141 is phosphorylated by CDC28.

It is found in the cytoplasm. It localises to the nucleus. Its function is as follows. As accessory component of the DNA polymerase epsilon complex participates in chromosomal DNA replication. It is required during synthesis of the leading and lagging DNA strands at the replication fork and binds at/or near replication origins and moves along DNA with the replication fork. It has 3'-5' proofreading exonuclease activity that correct errors arising during DNA replication. It is also involved in DNA synthesis during DNA repair. This Saccharomyces cerevisiae (strain ATCC 204508 / S288c) (Baker's yeast) protein is DNA polymerase epsilon subunit B (DPB2).